Consider the following 289-residue polypeptide: Phosphatidylserine decarboxylase proenzyme (289 aa).

Residues aspartate 89, histidine 146, and serine 252 each act as charge relay system; for autoendoproteolytic cleavage activity in the active site. The active-site Schiff-base intermediate with substrate; via pyruvic acid; for decarboxylase activity is the serine 252. Position 252 is a pyruvic acid (Ser); by autocatalysis (serine 252).

This sequence belongs to the phosphatidylserine decarboxylase family. PSD-B subfamily. Prokaryotic type I sub-subfamily. In terms of assembly, heterodimer of a large membrane-associated beta subunit and a small pyruvoyl-containing alpha subunit. Pyruvate serves as cofactor. Post-translationally, is synthesized initially as an inactive proenzyme. Formation of the active enzyme involves a self-maturation process in which the active site pyruvoyl group is generated from an internal serine residue via an autocatalytic post-translational modification. Two non-identical subunits are generated from the proenzyme in this reaction, and the pyruvate is formed at the N-terminus of the alpha chain, which is derived from the carboxyl end of the proenzyme. The autoendoproteolytic cleavage occurs by a canonical serine protease mechanism, in which the side chain hydroxyl group of the serine supplies its oxygen atom to form the C-terminus of the beta chain, while the remainder of the serine residue undergoes an oxidative deamination to produce ammonia and the pyruvoyl prosthetic group on the alpha chain. During this reaction, the Ser that is part of the protease active site of the proenzyme becomes the pyruvoyl prosthetic group, which constitutes an essential element of the active site of the mature decarboxylase.

The protein localises to the cell membrane. The catalysed reaction is a 1,2-diacyl-sn-glycero-3-phospho-L-serine + H(+) = a 1,2-diacyl-sn-glycero-3-phosphoethanolamine + CO2. It functions in the pathway phospholipid metabolism; phosphatidylethanolamine biosynthesis; phosphatidylethanolamine from CDP-diacylglycerol: step 2/2. Catalyzes the formation of phosphatidylethanolamine (PtdEtn) from phosphatidylserine (PtdSer). The chain is Phosphatidylserine decarboxylase proenzyme from Shewanella putrefaciens (strain CN-32 / ATCC BAA-453).